The chain runs to 96 residues: Pyrimidine/purine nucleoside phosphorylase (96 aa).

It belongs to the nucleoside phosphorylase PpnP family.

It carries out the reaction a purine D-ribonucleoside + phosphate = a purine nucleobase + alpha-D-ribose 1-phosphate. The enzyme catalyses adenosine + phosphate = alpha-D-ribose 1-phosphate + adenine. The catalysed reaction is cytidine + phosphate = cytosine + alpha-D-ribose 1-phosphate. It catalyses the reaction guanosine + phosphate = alpha-D-ribose 1-phosphate + guanine. It carries out the reaction inosine + phosphate = alpha-D-ribose 1-phosphate + hypoxanthine. The enzyme catalyses thymidine + phosphate = 2-deoxy-alpha-D-ribose 1-phosphate + thymine. The catalysed reaction is uridine + phosphate = alpha-D-ribose 1-phosphate + uracil. It catalyses the reaction xanthosine + phosphate = alpha-D-ribose 1-phosphate + xanthine. Catalyzes the phosphorolysis of diverse nucleosides, yielding D-ribose 1-phosphate and the respective free bases. Can use uridine, adenosine, guanosine, cytidine, thymidine, inosine and xanthosine as substrates. Also catalyzes the reverse reactions. This chain is Pyrimidine/purine nucleoside phosphorylase, found in Serratia proteamaculans (strain 568).